Here is a 71-residue protein sequence, read N- to C-terminus: General transcription and DNA repair factor IIH subunit TFB5 (71 aa).

This sequence belongs to the TFB5 family. In terms of assembly, component of the 7-subunit TFIIH core complex.

It localises to the nucleus. The protein localises to the chromosome. Functionally, component of the general transcription and DNA repair factor IIH (TFIIH) core complex, which is involved in general and transcription-coupled nucleotide excision repair (NER) of damaged DNA and in RNA transcription by RNA polymerase II. In NER, TFIIH acts by opening DNA around the lesion to allow the excision of the damaged oligonucleotide and its replacement by a new DNA fragment. In transcription, TFIIH has an essential role in transcription initiation. When the pre-initiation complex (PIC) has been established, TFIIH is required for promoter opening and promoter escape. Necessary for the stability of the TFIIH complex and for the presence of normal levels of TFIIH in the cell. Required for efficient binding of TFIIH to damaged DNA. Dispensable for normal development, but required when transcription is challenged. This Caenorhabditis elegans protein is General transcription and DNA repair factor IIH subunit TFB5.